The following is a 494-amino-acid chain: 3-octaprenyl-4-hydroxybenzoate carboxy-lyase (494 aa).

A Mn(2+)-binding site is contributed by Asn172. Prenylated FMN-binding positions include 175-177 (IYR), 189-191 (RWL), and 194-195 (RG). Residue Glu238 participates in Mn(2+) binding. Catalysis depends on Asp294, which acts as the Proton donor.

It belongs to the UbiD family. In terms of assembly, homohexamer. Prenylated FMN is required as a cofactor. It depends on Mn(2+) as a cofactor.

It localises to the cell membrane. The enzyme catalyses a 4-hydroxy-3-(all-trans-polyprenyl)benzoate + H(+) = a 2-(all-trans-polyprenyl)phenol + CO2. It participates in cofactor biosynthesis; ubiquinone biosynthesis. Its function is as follows. Catalyzes the decarboxylation of 3-octaprenyl-4-hydroxy benzoate to 2-octaprenylphenol, an intermediate step in ubiquinone biosynthesis. The chain is 3-octaprenyl-4-hydroxybenzoate carboxy-lyase from Albidiferax ferrireducens (strain ATCC BAA-621 / DSM 15236 / T118) (Rhodoferax ferrireducens).